The sequence spans 496 residues: Probable CtpA-like serine protease (496 aa).

Residues 1–16 (MDDKQHTSSSDDERAE) show a composition bias toward basic and acidic residues. The tract at residues 1-27 (MDDKQHTSSSDDERAEIATSNQDQETN) is disordered. Positions 18–27 (ATSNQDQETN) are enriched in polar residues. Residues 39 to 59 (FISILIGTTLITAVITVVAYI) traverse the membrane as a helical segment. Residues 124–206 (TKSFNEGVSG…TEVTLTVQRG (83 aa)) enclose the PDZ domain. Active-site charge relay system residues include serine 329, aspartate 340, and lysine 354.

The protein belongs to the peptidase S41A family.

The protein localises to the cell membrane. The protein is Probable CtpA-like serine protease of Staphylococcus aureus (strain Mu50 / ATCC 700699).